The following is a 316-amino-acid chain: UPF0324 membrane protein SO_4708 (316 aa).

The next 9 membrane-spanning stretches (helical) occupy residues 61-80 (LLSY…AAIE), 85-107 (NLGL…TRAL), 114-136 (GHLI…APAV), 146-168 (ALAC…GHLL), 175-197 (FGVW…SAYG), 207-226 (IKLA…ALIF), 233-252 (LNLP…AHWL), 262-281 (LFMV…GAGI), and 293-315 (PLLL…ILYF).

The protein belongs to the UPF0324 family.

The protein localises to the cell membrane. The protein is UPF0324 membrane protein SO_4708 of Shewanella oneidensis (strain ATCC 700550 / JCM 31522 / CIP 106686 / LMG 19005 / NCIMB 14063 / MR-1).